The chain runs to 139 residues: von Hippel-Lindau-like protein (139 aa).

The disordered stretch occupies residues Met1–Pro22. The segment at Ser54–Leu135 is beta-domain.

It belongs to the VHL family. Interacts via the beta domain with the ODD domain of HIF1A. This interaction is independent of prolyl hydroxylation of HIF1A. Abundantly expressed in the placenta.

In terms of biological role, functions as a dominant-negative VHL to serve as a protector of HIFalpha. In Homo sapiens (Human), this protein is von Hippel-Lindau-like protein (VHLL).